The sequence spans 398 residues: MTAQGIYLDNNATTRVDPDVLAEMLPLFTEQFGNPSSMHGFGAAVGGQDRMGAQAGAGAARAAHDSEIVFTSGGTESDNTAILSTLEAYPKKKSIVTSVVEHPAVLALCDYLEKKRGYTVHRIGVDNRGNLDLDAYKRCALGPDVAIVSIMWANNETGTIFPIEELAQLAKAAGAVFHTAVQAVGKIPMNVRHSAVDMLCACGHKLHAPKGVHALYVKRGLRFRPIVRGGHQERSRRAGNGERAGHRRAGGGAHVALMHMTDENTRVKRSRQAGAAILAAVPNCFVTGNPANRLPNTCNVAFEYIEGEAILLLLNEADIAASSGSACTSGSLEPSHVMRAMGVPYTAAHGPTRLSLSRETTEEEIDRVIRVVPGMRTGRSVSPYWSQAAPEGVRPVYS.

Pyridoxal 5'-phosphate contacts are provided by residues 74–75 (GT), asparagine 155, glutamine 182, and 202–204 (CGH). Lysine 205 carries the post-translational modification N6-(pyridoxal phosphate)lysine. Over residues 230 to 244 (GHQERSRRAGNGERA) the composition is skewed to basic and acidic residues. The segment at 230–253 (GHQERSRRAGNGERAGHRRAGGGA) is disordered. Catalysis depends on cysteine 327, which acts as the Cysteine persulfide intermediate. Cysteine 327 serves as a coordination point for [2Fe-2S] cluster.

Belongs to the class-V pyridoxal-phosphate-dependent aminotransferase family. NifS/IscS subfamily. As to quaternary structure, homodimer. Pyridoxal 5'-phosphate serves as cofactor.

It catalyses the reaction (sulfur carrier)-H + L-cysteine = (sulfur carrier)-SH + L-alanine. Its function is as follows. Catalyzes the removal of elemental sulfur atoms from cysteine to produce alanine. Seems to participate in the biosynthesis of the nitrogenase metalloclusters by providing the inorganic sulfur required for the Fe-S core formation. This Azospirillum brasilense protein is Cysteine desulfurase.